A 273-amino-acid chain; its full sequence is Putative B3 domain-containing protein At5g58280 (273 aa).

The segment at residues 127-218 is a DNA-binding region (TF-B3); it reads FVKSMVRSHV…KFKIYVFKGN (92 aa). Positions 225 to 273 are disordered; that stretch reads SARKRGRATTPSEEEEEEEDKDVEESGDEEHSSRATKRSSVRLLRKRKA. The span at 236–252 shows a compositional bias: acidic residues; sequence SEEEEEEEDKDVEESGD. Positions 258 to 273 are enriched in basic residues; the sequence is RATKRSSVRLLRKRKA.

The protein localises to the nucleus. The chain is Putative B3 domain-containing protein At5g58280 from Arabidopsis thaliana (Mouse-ear cress).